The following is a 322-amino-acid chain: Crystallin J1B (322 aa).

It belongs to the ADP-ribosylglycohydrolase family. J1 crystallin subfamily. As to expression, expressed in the rhopalia. Present in both the large and small eyes.

This is Crystallin J1B from Tripedalia cystophora (Jellyfish).